Here is an 87-residue protein sequence, read N- to C-terminus: Small ribosomal subunit protein uS17 (87 aa).

The protein belongs to the universal ribosomal protein uS17 family. As to quaternary structure, part of the 30S ribosomal subunit.

Functionally, one of the primary rRNA binding proteins, it binds specifically to the 5'-end of 16S ribosomal RNA. The chain is Small ribosomal subunit protein uS17 from Geobacillus thermodenitrificans (strain NG80-2).